Here is a 616-residue protein sequence, read N- to C-terminus: Dihydroxy-acid dehydratase (616 aa).

Asp81 contributes to the Mg(2+) binding site. Cys122 is a [2Fe-2S] cluster binding site. 2 residues coordinate Mg(2+): Asp123 and Lys124. The residue at position 124 (Lys124) is an N6-carboxylysine. Residue Cys195 coordinates [2Fe-2S] cluster. Position 491 (Glu491) interacts with Mg(2+). Ser517 (proton acceptor) is an active-site residue.

Belongs to the IlvD/Edd family. As to quaternary structure, homodimer. The cofactor is [2Fe-2S] cluster. It depends on Mg(2+) as a cofactor.

It carries out the reaction (2R)-2,3-dihydroxy-3-methylbutanoate = 3-methyl-2-oxobutanoate + H2O. It catalyses the reaction (2R,3R)-2,3-dihydroxy-3-methylpentanoate = (S)-3-methyl-2-oxopentanoate + H2O. The protein operates within amino-acid biosynthesis; L-isoleucine biosynthesis; L-isoleucine from 2-oxobutanoate: step 3/4. It participates in amino-acid biosynthesis; L-valine biosynthesis; L-valine from pyruvate: step 3/4. Functions in the biosynthesis of branched-chain amino acids. Catalyzes the dehydration of (2R,3R)-2,3-dihydroxy-3-methylpentanoate (2,3-dihydroxy-3-methylvalerate) into 2-oxo-3-methylpentanoate (2-oxo-3-methylvalerate) and of (2R)-2,3-dihydroxy-3-methylbutanoate (2,3-dihydroxyisovalerate) into 2-oxo-3-methylbutanoate (2-oxoisovalerate), the penultimate precursor to L-isoleucine and L-valine, respectively. The protein is Dihydroxy-acid dehydratase of Shigella boydii serotype 4 (strain Sb227).